The chain runs to 794 residues: uncharacterized protein (794 aa).

The signal sequence occupies residues 1-22 (MKFKYGAIVFSGLLGVSAILAA). Cys23 carries N-palmitoyl cysteine lipidation. Cys23 carries the S-diacylglycerol cysteine lipid modification. 2 stretches are compositionally biased toward polar residues: residues 182 to 200 (TSVQ…NNGV) and 245 to 261 (QMST…DANQ). Disordered regions lie at residues 182 to 208 (TSVQ…KIDK), 222 to 261 (NKAK…DANQ), 474 to 529 (FKIK…GKNG), 566 to 594 (SAAK…TEQK), and 737 to 757 (KNEK…RGKQ). Residues 475–501 (KIKSSNKSKSSSSKSSTKAETGKTSGG) are compositionally biased toward low complexity. Positions 511–526 (GAQNQGKKGEGAQNQG) are enriched in polar residues. A compositionally biased stretch (basic and acidic residues) spans 567–576 (AAKKEDKKSG). Over residues 577–593 (ESTTEQTQIQSKSVTEQ) the composition is skewed to polar residues. The segment covering 737–751 (KNEKKEGSDQKDSKS) has biased composition (basic and acidic residues).

The protein belongs to the MG185/MG260 family.

It localises to the cell membrane. This is an uncharacterized protein from Mycoplasma pneumoniae (strain ATCC 29342 / M129 / Subtype 1) (Mycoplasmoides pneumoniae).